Consider the following 291-residue polypeptide: 4-diphosphocytidyl-2-C-methyl-D-erythritol kinase (291 aa).

Residue Lys-10 is part of the active site. 100–110 (PIGGGLGGGSS) lines the ATP pocket. Asp-142 is a catalytic residue.

This sequence belongs to the GHMP kinase family. IspE subfamily. Homodimer.

It carries out the reaction 4-CDP-2-C-methyl-D-erythritol + ATP = 4-CDP-2-C-methyl-D-erythritol 2-phosphate + ADP + H(+). It participates in isoprenoid biosynthesis; isopentenyl diphosphate biosynthesis via DXP pathway; isopentenyl diphosphate from 1-deoxy-D-xylulose 5-phosphate: step 3/6. Its function is as follows. Catalyzes the phosphorylation of the position 2 hydroxy group of 4-diphosphocytidyl-2C-methyl-D-erythritol. This chain is 4-diphosphocytidyl-2-C-methyl-D-erythritol kinase, found in Hamiltonella defensa subsp. Acyrthosiphon pisum (strain 5AT).